Reading from the N-terminus, the 250-residue chain is Small ribosomal subunit protein uS2 (250 aa).

The protein belongs to the universal ribosomal protein uS2 family.

This Paraburkholderia phymatum (strain DSM 17167 / CIP 108236 / LMG 21445 / STM815) (Burkholderia phymatum) protein is Small ribosomal subunit protein uS2.